We begin with the raw amino-acid sequence, 382 residues long: uncharacterized protein (382 aa).

A run of 12 helical transmembrane segments spans residues 14–34 (GLLL…LWLA), 45–65 (VVSS…GYVI), 79–99 (FIFA…SWLA), 102–122 (FVAG…LMCS), 131–151 (LLAA…LLVS), 157–177 (LMSV…PLLF), 204–224 (LGVN…GLMP), 235–255 (ASIG…QWPI), 270–290 (VQVF…AMAP), 291–311 (ALFI…AWAC), 325–345 (ALLL…AMLM), and 348–368 (FSDN…LLML).

It belongs to the major facilitator superfamily. YcaD (TC 2.A.1.26) family.

The protein resides in the cell inner membrane. This is an uncharacterized protein from Shigella dysenteriae serotype 1 (strain Sd197).